Here is a 39-residue protein sequence, read N- to C-terminus: Cecropin (39 aa).

The protein resides in the secreted. Antibacterial peptide active against Gram-negative bacterium E.coli. Has no activity against Gram-positive bacterium M.luteus. Weakly active against M.luteus. This is Cecropin from Calliphora vicina (Blue blowfly).